We begin with the raw amino-acid sequence, 513 residues long: Varicidin biosynthesis cluster-specific transcription factor (513 aa).

A DNA-binding region (zn(2)-C6 fungal-type) is located at residues 16-54 (CERCRLHKLKCTILPQKRFEGPQEAPEQCTRCARAKAKC). 2 disordered regions span residues 58–92 (RRAPPKHRASSSNDRSSVSKGINSTTPATRTMQPN) and 97–116 (VSSHRIELPPSPASNQSSLK). A compositionally biased stretch (low complexity) spans 67–76 (SSSNDRSSVS). Over residues 77-92 (KGINSTTPATRTMQPN) the composition is skewed to polar residues.

The protein resides in the nucleus. Its function is as follows. Transcription factor that regulates the expression of the gene cluster that mediates the biosynthesis of varicidin A, an antifungal natural product containing a cis-octahydrodecalin core. The polypeptide is Varicidin biosynthesis cluster-specific transcription factor (Talaromyces variabilis (Penicillium variabile)).